Here is a 449-residue protein sequence, read N- to C-terminus: Neurexin-1a-beta (449 aa).

A signal peptide spans 1 to 38 (MLRLWPGGAPGGLASILLRISLRLALWLPPLTLGSALA). Over 39-373 (EGPGELYVPQ…EVIRESSSTT (335 aa)) the chain is Extracellular. Residues 71–272 (TTYIFGRDGG…DPNVRVEGSA (202 aa)) form the Laminin G-like domain. The tract at residues 276–366 (GDMPSSSITP…AKGYPSPEVI (91 aa)) is disordered. Low complexity predominate over residues 280-311 (SSSITPQSSVSAAGNRSETSPSITDITTTTAS). Residues 312–322 (NRQGKQTTTPQ) show a composition bias toward polar residues. A helical membrane pass occupies residues 374 to 394 (GMVVGIVAAAALCILILLYAM). Residues 395 to 449 (YKYRNRDEGSYHVDESRNYISNSATQPNGAAVKEKPIGVPKNKKDKKNKDKEYYV) lie on the Cytoplasmic side of the membrane. Positions 415–449 (SNSATQPNGAAVKEKPIGVPKNKKDKKNKDKEYYV) are disordered.

The protein belongs to the neurexin family.

The protein localises to the membrane. Its function is as follows. Neuronal cell surface protein that may be involved in cell recognition and cell adhesion. May play a role in formation or maintenance of synaptic junctions. This Danio rerio (Zebrafish) protein is Neurexin-1a-beta (nrxn1a).